Consider the following 482-residue polypeptide: Sugar transporter ERD6-like 16 (482 aa).

A run of 12 helical transmembrane segments spans residues 42 to 62 (LMVLFSTFVAVCGSFEFGSCV), 80 to 100 (LAEFSMFGSILTIGAMLGAVM), 117 to 137 (SACFCITGWLAVFFTKGALLL), 142 to 162 (FFTGYGIGVFSYVVPVYIAEI), 173 to 193 (TLNQLMIVIGSSVSFLIGSLI), 197 to 217 (TLALTGLAPCIVLLFGLCFIP), 280 to 300 (VIIGVSLMVFQQFVGINGIGF), 316 to 336 (LGTIAIACVQVPITVLGTILI), 344 to 364 (LIMISAGGIFLGCILTGTSFL), 382 to 402 (GVLIYVAAFSIGMGPVPWVIM), 413 to 433 (IAGSLVVLVNWSGAWAVSYTF), and 443 to 463 (GTFYLYSAFAAATIIFVAKMV).

This sequence belongs to the major facilitator superfamily. Sugar transporter (TC 2.A.1.1) family.

It is found in the membrane. Functionally, sugar transporter. The polypeptide is Sugar transporter ERD6-like 16 (Arabidopsis thaliana (Mouse-ear cress)).